The sequence spans 605 residues: LysM domain receptor-like kinase 10 (605 aa).

The signal sequence occupies residues 1–20; it reads MFSLPALLIGACAFAAAAVA. Topologically, residues 21 to 245 are extracellular; sequence ASGDGCRAGC…GMGNSLSGGA (225 aa). Intrachain disulfides connect cysteine 26–cysteine 89, cysteine 30–cysteine 161, and cysteine 87–cysteine 159. An N-linked (GlcNAc...) asparagine glycan is attached at asparagine 44. Chitin-binding positions include 115-121 and 142-148; these read GGDTYDA and PPGRIPG. Asparagine 154 and asparagine 158 each carry an N-linked (GlcNAc...) asparagine glycan. The LysM domain occupies 174 to 221; that stretch reads LTYPLWDGETLESVAAQYGFSSPAEMELIRRYNPGMGGVSGKGIVFIP. N-linked (GlcNAc...) asparagine glycosylation is present at asparagine 226. The helical transmembrane segment at 246 to 266 threads the bilayer; it reads IAGIVIACIAIFIVAIWLIIM. The Cytoplasmic portion of the chain corresponds to 267 to 605; that stretch reads FYRWQKFRKA…DLRDMDYHPF (339 aa). Serine 278 is subject to Phosphoserine. The region spanning 317-591 is the Protein kinase domain; sequence FSMEHKIGQG…RSVVVALMAL (275 aa). ATP is bound by residues 323 to 331 and lysine 344; that span reads IGQGGFGSV. Aspartate 436 functions as the Proton acceptor in the catalytic mechanism.

Belongs to the protein kinase superfamily. Ser/Thr protein kinase family.

It localises to the cell membrane. The enzyme catalyses L-seryl-[protein] + ATP = O-phospho-L-seryl-[protein] + ADP + H(+). It carries out the reaction L-threonyl-[protein] + ATP = O-phospho-L-threonyl-[protein] + ADP + H(+). This chain is LysM domain receptor-like kinase 10, found in Oryza sativa subsp. japonica (Rice).